Consider the following 167-residue polypeptide: SsrA-binding protein (167 aa).

Residues 139-158 show a composition bias toward basic and acidic residues; it reads QNHDKRDAAKERDWQRDKQR. A disordered region spans residues 139–167; it reads QNHDKRDAAKERDWQRDKQRVMRRHNRDA.

This sequence belongs to the SmpB family.

Its subcellular location is the cytoplasm. Required for rescue of stalled ribosomes mediated by trans-translation. Binds to transfer-messenger RNA (tmRNA), required for stable association of tmRNA with ribosomes. tmRNA and SmpB together mimic tRNA shape, replacing the anticodon stem-loop with SmpB. tmRNA is encoded by the ssrA gene; the 2 termini fold to resemble tRNA(Ala) and it encodes a 'tag peptide', a short internal open reading frame. During trans-translation Ala-aminoacylated tmRNA acts like a tRNA, entering the A-site of stalled ribosomes, displacing the stalled mRNA. The ribosome then switches to translate the ORF on the tmRNA; the nascent peptide is terminated with the 'tag peptide' encoded by the tmRNA and targeted for degradation. The ribosome is freed to recommence translation, which seems to be the essential function of trans-translation. This is SsrA-binding protein from Xanthomonas oryzae pv. oryzae (strain PXO99A).